A 164-amino-acid chain; its full sequence is Low molecular weight protein-tyrosine-phosphatase (164 aa).

The active-site Nucleophile is cysteine 9. Arginine 15 is a catalytic residue. The active-site Proton donor is the aspartate 128.

This sequence belongs to the low molecular weight phosphotyrosine protein phosphatase family.

The catalysed reaction is O-phospho-L-tyrosyl-[protein] + H2O = L-tyrosyl-[protein] + phosphate. Its function is as follows. Acts on tyrosine phosphorylated proteins, low-MW aryl phosphates and natural and synthetic acyl phosphates. May be involved in the regulation of sulfur amino acid metabolism. The polypeptide is Low molecular weight protein-tyrosine-phosphatase (ptpA) (Streptomyces coelicolor (strain ATCC BAA-471 / A3(2) / M145)).